The following is a 201-amino-acid chain: Ras-related protein Rab-9B (201 aa).

V18, G19, K20, S21, S22, D33, S34, A36, H38, and T39 together coordinate GTP. S21 contacts Mg(2+). The Switch 1 signature appears at 31 to 42 (KFDSQAFHTIGV). S34 carries the post-translational modification Phosphoserine. Mg(2+) is bound by residues T39 and D62. The Switch 2 signature appears at 64-78 (AGQERFKSLRTPFYR). GTP is bound by residues G65, N124, K125, A155, and K156. 2 S-geranylgeranyl cysteine lipidation sites follow: C200 and C201.

Belongs to the small GTPase superfamily. Rab family. As to quaternary structure, interacts (GTP-bound form) with SGSM1; the GDP-bound form has much lower affinity for SGSM1. The GTP-bound form but not the GDP-bound form interacts with HPS4 and the BLOC-3 complex (heterodimer of HPS1 and HPS4) but does not interact with HPS1 alone. Interacts (GTP-bound form) with NDE1. The cofactor is Mg(2+).

The protein localises to the cell membrane. It is found in the cytoplasmic vesicle. Its subcellular location is the phagosome membrane. It catalyses the reaction GTP + H2O = GDP + phosphate + H(+). Its activity is regulated as follows. Regulated by guanine nucleotide exchange factors (GEFs) which promote the exchange of bound GDP for free GTP. Regulated by GTPase activating proteins (GAPs) which increase the GTP hydrolysis activity. Inhibited by GDP dissociation inhibitors (GDIs). Its function is as follows. The small GTPases Rab are key regulators of intracellular membrane trafficking, from the formation of transport vesicles to their fusion with membranes. Rabs cycle between an inactive GDP-bound form and an active GTP-bound form that is able to recruit to membranes different sets of downstream effectors directly responsible for vesicle formation, movement, tethering and fusion. RAB9B is involved in the transport of proteins between the endosomes and the trans Golgi network. May use NDE1/NDEL1 as an effector to interact with the dynein motor complex in order to control retrograde trafficking of RAB9-associated late endosomes to the TGN. This Pongo abelii (Sumatran orangutan) protein is Ras-related protein Rab-9B (RAB9B).